Here is a 419-residue protein sequence, read N- to C-terminus: Ribosome biogenesis protein WDR12 homolog (419 aa).

Residues 10 to 91 (VQVHLKTKQE…EDSIEIEYVE (82 aa)) form a ubiquitin-like (UBL) domain region. 7 WD repeats span residues 103-140 (LHDD…KLTI), 142-184 (GHTA…NAVE), 191-230 (GHER…AGES), 249-287 (GHRE…IKTE), 289-328 (STNK…GSVV), 334-374 (GHNA…APLY), and 378-416 (GHGE…VENM).

This sequence belongs to the WD repeat WDR12/YTM1 family.

The protein localises to the nucleus. The protein resides in the nucleolus. Its subcellular location is the nucleoplasm. In terms of biological role, required for maturation of ribosomal RNAs and formation of the large ribosomal subunit. This is Ribosome biogenesis protein WDR12 homolog from Drosophila mojavensis (Fruit fly).